Consider the following 211-residue polypeptide: Small ribosomal subunit protein uS5 (211 aa).

The region spanning 50-113 (LEDEVLDINM…DNAKINITRI (64 aa)) is the S5 DRBM domain.

The protein belongs to the universal ribosomal protein uS5 family. In terms of assembly, part of the 30S ribosomal subunit. Contacts protein S4.

In terms of biological role, with S4 and S12 plays an important role in translational accuracy. The sequence is that of Small ribosomal subunit protein uS5 from Methanococcoides burtonii (strain DSM 6242 / NBRC 107633 / OCM 468 / ACE-M).